The following is a 172-amino-acid chain: uncharacterized protein (172 aa).

The interval 22–64 is disordered; it reads RSVSSSPAAKQPAPGTVAQSFPPGELALRDETGGRGRGTRGIR.

This is an uncharacterized protein from Human cytomegalovirus (strain AD169) (HHV-5).